The following is a 370-amino-acid chain: tRNA (guanine(26)-N(2))-dimethyltransferase (370 aa).

A Trm1 methyltransferase domain is found at 4–368 (TWVTEGRTTI…APLEEIRDCI (365 aa)). 5 residues coordinate S-adenosyl-L-methionine: Arg41, Arg66, Asp82, Asp108, and Ala109. 4 residues coordinate Zn(2+): Cys237, Cys240, Cys256, and Cys259.

The protein belongs to the class I-like SAM-binding methyltransferase superfamily. Trm1 family.

The enzyme catalyses guanosine(26) in tRNA + 2 S-adenosyl-L-methionine = N(2)-dimethylguanosine(26) in tRNA + 2 S-adenosyl-L-homocysteine + 2 H(+). Functionally, dimethylates a single guanine residue at position 26 of a number of tRNAs using S-adenosyl-L-methionine as donor of the methyl groups. This is tRNA (guanine(26)-N(2))-dimethyltransferase from Methanospirillum hungatei JF-1 (strain ATCC 27890 / DSM 864 / NBRC 100397 / JF-1).